The chain runs to 380 residues: ER-phagy receptor 1 (380 aa).

Positions 9–74 (DCYEILQVNH…DKRKWHEKDY (66 aa)) constitute a J domain. A C2H2-type zinc finger spans residues 270 to 294 (IMCMVCNKNFRSQNQLENHENSKKH). A disordered region spans residues 307-337 (KHAKEAQKNAESNKQPEDAPSESPYSNKVSS). Residue Ser-344 is modified to Phosphoserine. The AIM motif lies at 352–355 (FTFV). The FFAT signature appears at 361 to 367 (EFYTASE).

In terms of assembly, interacts (via the AIM motif) with atg8. Interacts (via the FFAT motif) with the vesicle-associated membrane protein-associated protein (VAP) family proteins scs2 and scs22.

It is found in the endoplasmic reticulum. Its subcellular location is the preautophagosomal structure. In terms of biological role, reticulophagy receptor required for autophagosomal sequestration of endoplasmic reticulum (ER) membranes during ER stress. Confers resistance to ER stress by promoting the autophagic degradation of the ER (ER-phagy or reticulophagy). Acts as a bridging molecule to mediate the association between atg8 on the autophagic membrane and the vesicle-associated membrane protein-associated proteins (VAPs) scs2 and scs22 on the ER. May play a role in meiosis. This Schizosaccharomyces pombe (strain 972 / ATCC 24843) (Fission yeast) protein is ER-phagy receptor 1.